The primary structure comprises 388 residues: uncharacterized protein (388 aa).

Positions 68-96 form a coiled coil; that stretch reads KVDRMSEEEERMAIATRKAKEVAKELSET. Residues 162–388 are disordered; that stretch reads GSHPLVREFN…PPQQDWFDSV (227 aa). Basic and acidic residues-rich tracts occupy residues 166 to 176 and 196 to 208; these read LVREFNGEKPP and ATDKKTGSKQSDK. The span at 233–251 shows a compositional bias: basic residues; the sequence is GVKHQHAIRRDDRHRHGMR. Low complexity-rich tracts occupy residues 265–279 and 293–346; these read QQQQCPVQGQQSRGQ and QRRP…QRPA.

This is an uncharacterized protein from Frog virus 3 (isolate Goorha) (FV-3).